Consider the following 241-residue polypeptide: Small ribosomal subunit protein uS2 (241 aa).

This sequence belongs to the universal ribosomal protein uS2 family.

The polypeptide is Small ribosomal subunit protein uS2 (Enterobacter sp. (strain 638)).